The sequence spans 229 residues: Potassium/proton antiporter CemA (229 aa).

Transmembrane regions (helical) follow at residues 7-27 (FTPL…SLLF), 107-127 (ILHF…SIFG), and 189-209 (IISG…KYWI).

This sequence belongs to the CemA family.

It localises to the plastid. Its subcellular location is the chloroplast inner membrane. The catalysed reaction is K(+)(in) + H(+)(out) = K(+)(out) + H(+)(in). In terms of biological role, contributes to K(+)/H(+) antiport activity by supporting proton efflux to control proton extrusion and homeostasis in chloroplasts in a light-dependent manner to modulate photosynthesis. Prevents excessive induction of non-photochemical quenching (NPQ) under continuous-light conditions. Indirectly promotes efficient inorganic carbon uptake into chloroplasts. The polypeptide is Potassium/proton antiporter CemA (Guizotia abyssinica (Niger)).